The chain runs to 342 residues: Heat-inducible transcription repressor HrcA (342 aa).

The protein belongs to the HrcA family.

Negative regulator of class I heat shock genes (grpE-dnaK-dnaJ and groELS operons). Prevents heat-shock induction of these operons. The polypeptide is Heat-inducible transcription repressor HrcA (Shouchella clausii (strain KSM-K16) (Alkalihalobacillus clausii)).